The sequence spans 176 residues: Translation initiation factor IF-3 (176 aa).

It belongs to the IF-3 family. As to quaternary structure, monomer.

It is found in the cytoplasm. IF-3 binds to the 30S ribosomal subunit and shifts the equilibrium between 70S ribosomes and their 50S and 30S subunits in favor of the free subunits, thus enhancing the availability of 30S subunits on which protein synthesis initiation begins. In Nitratidesulfovibrio vulgaris (strain DSM 19637 / Miyazaki F) (Desulfovibrio vulgaris), this protein is Translation initiation factor IF-3.